Here is a 224-residue protein sequence, read N- to C-terminus: Orotate phosphoribosyltransferase (224 aa).

5-phospho-alpha-D-ribose 1-diphosphate contacts are provided by residues Lys-26, 73-74, Arg-100, Lys-101, Lys-104, His-106, and 127-135; these read YK and EDVTTAGTS. Orotate is bound by residues Thr-131 and Arg-160.

The protein belongs to the purine/pyrimidine phosphoribosyltransferase family. PyrE subfamily. As to quaternary structure, homodimer. Mg(2+) serves as cofactor.

It catalyses the reaction orotidine 5'-phosphate + diphosphate = orotate + 5-phospho-alpha-D-ribose 1-diphosphate. It participates in pyrimidine metabolism; UMP biosynthesis via de novo pathway; UMP from orotate: step 1/2. Catalyzes the transfer of a ribosyl phosphate group from 5-phosphoribose 1-diphosphate to orotate, leading to the formation of orotidine monophosphate (OMP). The polypeptide is Orotate phosphoribosyltransferase (Clostridium beijerinckii (strain ATCC 51743 / NCIMB 8052) (Clostridium acetobutylicum)).